We begin with the raw amino-acid sequence, 194 residues long: Large ribosomal subunit protein bL12m (194 aa).

The N-terminal 33 residues, 1-33, are a transit peptide targeting the mitochondrion; it reads MSLRILAKRSSSIWMKTRVTPALISPITITTRF. Residue Asn-34 is glycosylated (N-linked (GlcNAc...) asparagine). The tract at residues 101 to 120 is disordered; the sequence is AGNVPSSTGEAGSGAEEEAK. Over residues 105–114 the composition is skewed to low complexity; the sequence is PSSTGEAGSG.

It belongs to the bacterial ribosomal protein bL12 family. In terms of assembly, component of the mitochondrial large ribosomal subunit (mt-LSU). Mature yeast 74S mitochondrial ribosomes consist of a small (37S) and a large (54S) subunit. The 37S small subunit contains a 15S ribosomal RNA (15S mt-rRNA) and 34 different proteins. The 54S large subunit contains a 21S rRNA (21S mt-rRNA) and 46 different proteins. Post-translationally, N-glycosylated.

The protein localises to the mitochondrion. Component of the mitochondrial ribosome (mitoribosome), a dedicated translation machinery responsible for the synthesis of mitochondrial genome-encoded proteins, including at least some of the essential transmembrane subunits of the mitochondrial respiratory chain. The mitoribosomes are attached to the mitochondrial inner membrane and translation products are cotranslationally integrated into the membrane. This Saccharomyces cerevisiae (strain ATCC 204508 / S288c) (Baker's yeast) protein is Large ribosomal subunit protein bL12m (MNP1).